Reading from the N-terminus, the 442-residue chain is MANSHVAVLAFPFGSHGQAILAVTRRLATAAPSTVFSFLNTSQSNFSLLSSDLPPNIRVHDVSDGVPEGYVLSRNPQEAVELFLEAAPEIFRRELAVAETEVGRKVTCMLTDAFIWFAGDMAAEMKVSWVAFWTSGTRSLLISTQISSEKQSLSKETLGCISGMEKIRVKDTPEGVVFGNLDSVFSKMLHQMGLALPRATTVYMNSFEELDPTLTDNLRLKFKRYLSIGPLALLFSTSQRETPLHDPHGCLAWIKKRSTASVVYIAFGRVMTPPPGELVVVAQGLESSKVPFVWSLQEKNMVHLPKGFLDGTREQGMVVPWAPQVELLNHEAMGVFVSHGGWNSVLESVSAGVPMICRPIFGDHALNARSVEAVWEIGMTISSGVFTKDGFEESLDRVLVQDDGKKMKFNAKKLKELAQEAVSTEGSSFENFKGLLDEVMKV.

UDP-alpha-D-glucose is bound by residues Ala-322 to Gln-324, His-339 to Glu-347, and Phe-361 to His-364.

Belongs to the UDP-glycosyltransferase family.

This Arabidopsis thaliana (Mouse-ear cress) protein is UDP-glycosyltransferase 78D4 (UGT78D4).